The chain runs to 354 residues: Virulence plasmid protein pGP2-D (354 aa).

The protein is Virulence plasmid protein pGP2-D of Chlamydia trachomatis serovar L2 (strain ATCC VR-902B / DSM 19102 / 434/Bu).